The following is a 97-amino-acid chain: Small ribosomal subunit protein eS25 (97 aa).

Residues 1 to 24 (MAPAASGAKKQKKKWSKGKVKDKA) form a disordered region. Over residues 9-18 (KKQKKKWSKG) the composition is skewed to basic residues.

This sequence belongs to the eukaryotic ribosomal protein eS25 family. As to quaternary structure, component of the small ribosomal subunit (SSU). Mature N.crassa ribosomes consist of a small (40S) and a large (60S) subunit. The 40S small subunit contains 1 molecule of ribosomal RNA (18S rRNA) and at least 32 different proteins. The large 60S subunit contains 3 rRNA molecules (26S, 5.8S and 5S rRNA) and at least 42 different proteins.

The protein resides in the cytoplasm. Functionally, component of the ribosome, a large ribonucleoprotein complex responsible for the synthesis of proteins in the cell. The small ribosomal subunit (SSU) binds messenger RNAs (mRNAs) and translates the encoded message by selecting cognate aminoacyl-transfer RNA (tRNA) molecules. The large subunit (LSU) contains the ribosomal catalytic site termed the peptidyl transferase center (PTC), which catalyzes the formation of peptide bonds, thereby polymerizing the amino acids delivered by tRNAs into a polypeptide chain. The nascent polypeptides leave the ribosome through a tunnel in the LSU and interact with protein factors that function in enzymatic processing, targeting, and the membrane insertion of nascent chains at the exit of the ribosomal tunnel. This Neurospora crassa (strain ATCC 24698 / 74-OR23-1A / CBS 708.71 / DSM 1257 / FGSC 987) protein is Small ribosomal subunit protein eS25 (rps-25).